The chain runs to 525 residues: Bifunctional purine biosynthesis protein PurH (525 aa).

Positions 1 to 149 (MSDPVIKRAL…KNNESVTVVT (149 aa)) constitute an MGS-like domain.

Belongs to the PurH family.

The enzyme catalyses (6R)-10-formyltetrahydrofolate + 5-amino-1-(5-phospho-beta-D-ribosyl)imidazole-4-carboxamide = 5-formamido-1-(5-phospho-D-ribosyl)imidazole-4-carboxamide + (6S)-5,6,7,8-tetrahydrofolate. It carries out the reaction IMP + H2O = 5-formamido-1-(5-phospho-D-ribosyl)imidazole-4-carboxamide. Its pathway is purine metabolism; IMP biosynthesis via de novo pathway; 5-formamido-1-(5-phospho-D-ribosyl)imidazole-4-carboxamide from 5-amino-1-(5-phospho-D-ribosyl)imidazole-4-carboxamide (10-formyl THF route): step 1/1. It functions in the pathway purine metabolism; IMP biosynthesis via de novo pathway; IMP from 5-formamido-1-(5-phospho-D-ribosyl)imidazole-4-carboxamide: step 1/1. In Pelodictyon phaeoclathratiforme (strain DSM 5477 / BU-1), this protein is Bifunctional purine biosynthesis protein PurH.